The chain runs to 1342 residues: DNA-directed RNA polymerase subunit beta (1342 aa).

The protein belongs to the RNA polymerase beta chain family. As to quaternary structure, the RNAP catalytic core consists of 2 alpha, 1 beta, 1 beta' and 1 omega subunit. When a sigma factor is associated with the core the holoenzyme is formed, which can initiate transcription.

The catalysed reaction is RNA(n) + a ribonucleoside 5'-triphosphate = RNA(n+1) + diphosphate. Its function is as follows. DNA-dependent RNA polymerase catalyzes the transcription of DNA into RNA using the four ribonucleoside triphosphates as substrates. This is DNA-directed RNA polymerase subunit beta from Serratia proteamaculans (strain 568).